A 72-amino-acid chain; its full sequence is Phycobilisome 37.5 kDa linker polypeptide, phycocyanin-associated, rod (72 aa).

The PBS-linker domain maps to 1-72 (MTSSAAAIRL…ASGNISVREF (72 aa)).

Belongs to the phycobilisome linker protein family.

It localises to the cellular thylakoid membrane. Functionally, rod linker protein, associated with phycocyanin. Linker polypeptides determine the state of aggregation and the location of the disk-shaped phycobiliprotein units within the phycobilisome and modulate their spectroscopic properties in order to mediate a directed and optimal energy transfer. This Pseudanabaena tenuis (strain PCC 7409) protein is Phycobilisome 37.5 kDa linker polypeptide, phycocyanin-associated, rod (cpcH2).